An 857-amino-acid chain; its full sequence is Dimethylglycine dehydrogenase, mitochondrial (857 aa).

Residues 1-43 constitute a mitochondrion transit peptide; it reads MLRLGALRLRGLALRSSQGRPSSAGLREGQESPPSPPEWKDRA. The segment at 15–39 is disordered; sequence RSSQGRPSSAGLREGQESPPSPPEW. FAD-binding positions include 52–53, 73–74, and 80–88; these read CV, EK, and GSTWHAAGL. At His-84 the chain carries Tele-8alpha-FAD histidine. At Lys-107 the chain carries N6-acetyllysine. Lys-141 is modified (N6-acetyllysine; alternate). The residue at position 141 (Lys-141) is an N6-succinyllysine; alternate. Lys-161 carries the post-translational modification N6-acetyllysine. Position 212 (Val-212) interacts with FAD. Lys-216 bears the N6-acetyllysine mark. Residue Trp-244 coordinates FAD. 2 positions are modified to N6-succinyllysine: Lys-310 and Lys-312. N6-acetyllysine occurs at positions 328 and 353. Residue 390-395 coordinates FAD; the sequence is FGYGII. Lys-427, Lys-469, and Lys-516 each carry N6-acetyllysine; alternate. N6-succinyllysine; alternate is present on residues Lys-427, Lys-469, and Lys-516. 573 to 575 provides a ligand contact to (6S)-5,6,7,8-tetrahydrofolate; sequence ELT. N6-acetyllysine; alternate is present on Lys-648. Lys-648 bears the N6-succinyllysine; alternate mark. Residues Tyr-669, 676–678, and Tyr-737 each bind (6S)-5,6,7,8-tetrahydrofolate; that span reads ELY. The residue at position 757 (Lys-757) is an N6-acetyllysine. An N6-acetyllysine; alternate modification is found at Lys-786. At Lys-786 the chain carries N6-succinyllysine; alternate. Residue Lys-788 is modified to N6-succinyllysine.

Belongs to the GcvT family. FAD serves as cofactor.

The protein resides in the mitochondrion. The enzyme catalyses (6S)-5,6,7,8-tetrahydrofolyl-(gamma-L-Glu)(n) + N,N-dimethylglycine + oxidized [electron-transfer flavoprotein] + H(+) = (6R)-5,10-methylenetetrahydrofolyl-(gamma-L-Glu)(n) + sarcosine + reduced [electron-transfer flavoprotein]. It participates in amine and polyamine degradation; betaine degradation; sarcosine from betaine: step 2/2. Its function is as follows. Catalyzes the demethylation of N,N-dimethylglycine to sarcosine. Also has activity with sarcosine in vitro. The protein is Dimethylglycine dehydrogenase, mitochondrial (Dmgdh) of Rattus norvegicus (Rat).